The following is a 503-amino-acid chain: Intracellular exo-alpha-(1-&gt;5)-L-arabinofuranosidase (503 aa).

3 residues coordinate alpha-L-arabinofuranose: E27, N72, and N172. The active-site Proton donor/acceptor is the E173. The alpha-L-arabinofuranose site is built by Y244, E292, and Q352. E292 serves as the catalytic Nucleophile.

The protein belongs to the glycosyl hydrolase 51 family. As to quaternary structure, homohexamer; trimer of dimers.

The protein localises to the cytoplasm. The enzyme catalyses Hydrolysis of terminal non-reducing alpha-L-arabinofuranoside residues in alpha-L-arabinosides.. It participates in glycan metabolism; L-arabinan degradation. Its function is as follows. Involved in the degradation of arabinan and is a key enzyme in the complete degradation of the plant cell wall. Catalyzes the cleavage of terminal alpha-(1-&gt;5)-arabinofuranosyl bonds in small oligosaccharides as alpha-(1-&gt;5)-linked arabinobiose/arabinotriose, but does not display significant activity against linear non-substituted arabinan. It is also highly efficient in the cleavage of alpha-(1-&gt;3)-linked arabinoside of xylobiose and of the alpha-(1-&gt;3)-linked arabinoside decorations of polymeric wheat arabinoxylan. It exhibits very low activity against sugar beet arabinan. The polypeptide is Intracellular exo-alpha-(1-&gt;5)-L-arabinofuranosidase (Acetivibrio thermocellus (strain ATCC 27405 / DSM 1237 / JCM 9322 / NBRC 103400 / NCIMB 10682 / NRRL B-4536 / VPI 7372) (Clostridium thermocellum)).